A 197-amino-acid polypeptide reads, in one-letter code: Elongation factor Ts (197 aa).

The involved in Mg(2+) ion dislocation from EF-Tu stretch occupies residues 81-84 (TDFV).

It belongs to the EF-Ts family.

It is found in the cytoplasm. Associates with the EF-Tu.GDP complex and induces the exchange of GDP to GTP. It remains bound to the aminoacyl-tRNA.EF-Tu.GTP complex up to the GTP hydrolysis stage on the ribosome. The sequence is that of Elongation factor Ts from Fervidobacterium nodosum (strain ATCC 35602 / DSM 5306 / Rt17-B1).